Consider the following 455-residue polypeptide: Glutamyl-tRNA reductase (455 aa).

Residues 49–52 (TCNR), S109, 114–116 (ETQ), and Q120 each bind substrate. C50 acts as the Nucleophile in catalysis. 189-194 (GAGKMG) serves as a coordination point for NADP(+).

This sequence belongs to the glutamyl-tRNA reductase family. In terms of assembly, homodimer.

It catalyses the reaction (S)-4-amino-5-oxopentanoate + tRNA(Glu) + NADP(+) = L-glutamyl-tRNA(Glu) + NADPH + H(+). It participates in porphyrin-containing compound metabolism; protoporphyrin-IX biosynthesis; 5-aminolevulinate from L-glutamyl-tRNA(Glu): step 1/2. Its function is as follows. Catalyzes the NADPH-dependent reduction of glutamyl-tRNA(Glu) to glutamate 1-semialdehyde (GSA). The protein is Glutamyl-tRNA reductase of Bacillus subtilis (strain 168).